Consider the following 262-residue polypeptide: Cytochrome c oxidase subunit 3 (262 aa).

Helical transmembrane passes span 16–36 (PWPY…VVYF), 39–59 (SQTW…IVWW), 83–103 (GMLL…WAFF), 128–148 (FSVP…VTWA), 160–180 (AING…LQAM), 198–218 (FFVA…FLAV), and 241–261 (WYWH…YWWG).

This sequence belongs to the cytochrome c oxidase subunit 3 family. In terms of assembly, component of the cytochrome c oxidase (complex IV, CIV), a multisubunit enzyme composed of a catalytic core of 3 subunits and several supernumerary subunits. The complex exists as a monomer or a dimer and forms supercomplexes (SCs) in the inner mitochondrial membrane with ubiquinol-cytochrome c oxidoreductase (cytochrome b-c1 complex, complex III, CIII).

It is found in the mitochondrion inner membrane. The catalysed reaction is 4 Fe(II)-[cytochrome c] + O2 + 8 H(+)(in) = 4 Fe(III)-[cytochrome c] + 2 H2O + 4 H(+)(out). Functionally, component of the cytochrome c oxidase, the last enzyme in the mitochondrial electron transport chain which drives oxidative phosphorylation. The respiratory chain contains 3 multisubunit complexes succinate dehydrogenase (complex II, CII), ubiquinol-cytochrome c oxidoreductase (cytochrome b-c1 complex, complex III, CIII) and cytochrome c oxidase (complex IV, CIV), that cooperate to transfer electrons derived from NADH and succinate to molecular oxygen, creating an electrochemical gradient over the inner membrane that drives transmembrane transport and the ATP synthase. Cytochrome c oxidase is the component of the respiratory chain that catalyzes the reduction of oxygen to water. Electrons originating from reduced cytochrome c in the intermembrane space (IMS) are transferred via the dinuclear copper A center (CU(A)) of subunit 2 and heme A of subunit 1 to the active site in subunit 1, a binuclear center (BNC) formed by heme A3 and copper B (CU(B)). The BNC reduces molecular oxygen to 2 water molecules using 4 electrons from cytochrome c in the IMS and 4 protons from the mitochondrial matrix. In Metridium senile (Brown sea anemone), this protein is Cytochrome c oxidase subunit 3 (COIII).